The chain runs to 290 residues: MSRLGNRADWADDEEFDDPSALPPQQVTTNKDGTKTVVSYRFNDEGKKVKVTRRIKTTVVREHVNPQVAERRSWAKFGLEKGHAAGPSFDTTSVGENIVFRPSVNWRAQAAEAEKAGGEKGSIKDQLKDKKVKCRICSGEHFTARCPFKDTMAPVDESTGAAGGEPGAEDEAAAGGLGAGTSSYVPPHMRKGAASGGERMAGKYEKDDLATLRVTNVSELAEESEIRDLFERFGRVTRVFLARDRETQRAKGFAFISFADRSDAARACEKMDGFGYRHLILRVEFAKRAT.

2 disordered regions span residues 1–35 and 157–200; these read MSRLGNRADWADDEEFDDPSALPPQQVTTNKDGTK and ESTG…GERM. Residues 210–288 form the RRM domain; the sequence is ATLRVTNVSE…LILRVEFAKR (79 aa).

It belongs to the eIF-3 subunit G family. As to quaternary structure, component of the eukaryotic translation initiation factor 3 (eIF-3) complex.

The protein resides in the cytoplasm. Its function is as follows. RNA-binding component of the eukaryotic translation initiation factor 3 (eIF-3) complex, which is involved in protein synthesis of a specialized repertoire of mRNAs and, together with other initiation factors, stimulates binding of mRNA and methionyl-tRNAi to the 40S ribosome. The eIF-3 complex specifically targets and initiates translation of a subset of mRNAs involved in cell proliferation. This subunit can bind 18S rRNA. This Aspergillus clavatus (strain ATCC 1007 / CBS 513.65 / DSM 816 / NCTC 3887 / NRRL 1 / QM 1276 / 107) protein is Eukaryotic translation initiation factor 3 subunit G (tif35).